The chain runs to 457 residues: Adenylosuccinate synthetase isozyme 2 B (457 aa).

GTP-binding positions include 40-46 (GDEGKGK) and 68-70 (GHT). Asp-41 (proton acceptor) is an active-site residue. Mg(2+) is bound by residues Asp-41 and Gly-68. Position 41 (Asp-41) interacts with substrate. Residues 41–44 (DEGK), 66–69 (NAGH), Thr-163, Arg-177, Asn-256, Thr-271, and Arg-335 each bind IMP. The Proton donor role is filled by His-69. 331–337 (VTTGRKR) contributes to the substrate binding site. Residues Arg-337, 363-365 (KLD), and 445-448 (GVGK) contribute to the GTP site.

This sequence belongs to the adenylosuccinate synthetase family. As to quaternary structure, homodimer. Mg(2+) is required as a cofactor.

Its subcellular location is the cytoplasm. The protein localises to the mitochondrion. The catalysed reaction is IMP + L-aspartate + GTP = N(6)-(1,2-dicarboxyethyl)-AMP + GDP + phosphate + 2 H(+). It participates in purine metabolism; AMP biosynthesis via de novo pathway; AMP from IMP: step 1/2. With respect to regulation, inhibited competitively by AMP and IMP and non-competitively by fructose 1,6-bisphosphate. Functionally, plays an important role in the de novo pathway and in the salvage pathway of purine nucleotide biosynthesis. Catalyzes the first committed step in the biosynthesis of AMP from IMP. The polypeptide is Adenylosuccinate synthetase isozyme 2 B (adss2-b) (Xenopus tropicalis (Western clawed frog)).